The primary structure comprises 450 residues: Tubulin alpha chain (450 aa).

An MREC motif motif is present at residues 1–4 (MREC). Q11 contacts GTP. K40 carries the post-translational modification N6-acetyllysine. Residues E71, S140, G144, T145, T179, N206, and N228 each contribute to the GTP site. Mg(2+) is bound at residue E71. Residue E254 is part of the active site. Residue E444 is modified to 5-glutamyl polyglutamate.

Belongs to the tubulin family. Dimer of alpha and beta chains. A typical microtubule is a hollow water-filled tube with an outer diameter of 25 nm and an inner diameter of 15 nM. Alpha-beta heterodimers associate head-to-tail to form protofilaments running lengthwise along the microtubule wall with the beta-tubulin subunit facing the microtubule plus end conferring a structural polarity. Microtubules usually have 13 protofilaments but different protofilament numbers can be found in some organisms and specialized cells. Requires Mg(2+) as cofactor. In terms of processing, some glutamate residues at the C-terminus are polyglycylated, resulting in polyglycine chains on the gamma-carboxyl group. Glycylation is mainly limited to tubulin incorporated into axonemes (cilia and flagella) whereas glutamylation is prevalent in neuronal cells, centrioles, axonemes, and the mitotic spindle. Both modifications can coexist on the same protein on adjacent residues, and lowering polyglycylation levels increases polyglutamylation, and reciprocally. The precise function of polyglycylation is still unclear. Some glutamate residues at the C-terminus are polyglutamylated, resulting in polyglutamate chains on the gamma-carboxyl group. Polyglutamylation plays a key role in microtubule severing by spastin (SPAST). SPAST preferentially recognizes and acts on microtubules decorated with short polyglutamate tails: severing activity by SPAST increases as the number of glutamates per tubulin rises from one to eight, but decreases beyond this glutamylation threshold. Post-translationally, acetylation of alpha chains at Lys-40 is located inside the microtubule lumen. This modification has been correlated with increased microtubule stability, intracellular transport and ciliary assembly. In terms of processing, undergoes a tyrosination/detyrosination cycle, the cyclic removal and re-addition of a C-terminal tyrosine residue by the enzymes tubulin tyrosine carboxypeptidase (MATCAP, VASH1 or VASH2) and tubulin tyrosine ligase (TTL), respectively. Tyrosination promotes microtubule interaction with CAP-Gly microtubule plus-end tracking proteins. Tyrosinated tubulins regulate the initiation of dynein-driven motility. Post-translationally, detyrosination is involved in metaphase plate congression by guiding chromosomes during mitosis. Detyrosination increases microtubules-dependent mechanotransduction in dystrophic cardiac and skeletal muscle. In cardiomyocytes, detyrosinated microtubules are required to resist to contractile compression during contraction.

The protein resides in the cytoplasm. It is found in the cytoskeleton. The enzyme catalyses GTP + H2O = GDP + phosphate + H(+). Functionally, tubulin is the major constituent of microtubules, a cylinder consisting of laterally associated linear protofilaments composed of alpha- and beta-tubulin heterodimers. Microtubules grow by the addition of GTP-tubulin dimers to the microtubule end, where a stabilizing cap forms. Below the cap, tubulin dimers are in GDP-bound state, owing to GTPase activity of alpha-tubulin. The chain is Tubulin alpha chain from Notophthalmus viridescens (Eastern newt).